Reading from the N-terminus, the 197-residue chain is Probable UbiX-like flavin prenyltransferase (197 aa).

FMN is bound by residues 9–11, Ser-36, 87–90, and Arg-122; these read GAT and SMKT.

The protein belongs to the UbiX/PAD1 family. YclB subfamily. As to quaternary structure, homododecamer.

The enzyme catalyses dimethylallyl phosphate + FMNH2 = prenylated FMNH2 + phosphate. Functionally, flavin prenyltransferase that catalyzes the synthesis of the prenylated FMN cofactor (prenyl-FMN) for phenolic acid decarboxylase C. Involved in the decarboxylation and detoxification of phenolic derivatives under both aerobic and anaerobic conditions. This is Probable UbiX-like flavin prenyltransferase (ecdB) from Escherichia coli.